The sequence spans 709 residues: Elongation factor G (709 aa).

Residues 6–295 enclose the tr-type G domain; sequence KFLRNIGIMA…AVCTYLPSPL (290 aa). Residues 15 to 22, 92 to 96, and 146 to 149 contribute to the GTP site; these read AHIDAGKT, DTPGH, and NKMD.

The protein belongs to the TRAFAC class translation factor GTPase superfamily. Classic translation factor GTPase family. EF-G/EF-2 subfamily.

The protein localises to the cytoplasm. Its function is as follows. Catalyzes the GTP-dependent ribosomal translocation step during translation elongation. During this step, the ribosome changes from the pre-translocational (PRE) to the post-translocational (POST) state as the newly formed A-site-bound peptidyl-tRNA and P-site-bound deacylated tRNA move to the P and E sites, respectively. Catalyzes the coordinated movement of the two tRNA molecules, the mRNA and conformational changes in the ribosome. The protein is Elongation factor G of Amoebophilus asiaticus (strain 5a2).